The chain runs to 102 residues: Protein RnfH (102 aa).

This sequence belongs to the UPF0125 (RnfH) family.

The chain is Protein RnfH from Haemophilus influenzae (strain PittEE).